The chain runs to 478 residues: Glycogen synthase (478 aa).

Lys15 contributes to the ADP-alpha-D-glucose binding site.

Belongs to the glycosyltransferase 1 family. Bacterial/plant glycogen synthase subfamily.

The catalysed reaction is [(1-&gt;4)-alpha-D-glucosyl](n) + ADP-alpha-D-glucose = [(1-&gt;4)-alpha-D-glucosyl](n+1) + ADP + H(+). Its pathway is glycan biosynthesis; glycogen biosynthesis. In terms of biological role, synthesizes alpha-1,4-glucan chains using ADP-glucose. This Actinobacillus pleuropneumoniae serotype 5b (strain L20) protein is Glycogen synthase.